The primary structure comprises 228 residues: PKHD-type hydroxylase Rmet_0838 (228 aa).

The Fe2OG dioxygenase domain occupies 78–179 (RVLPPMFNRY…RWASFFWAQS (102 aa)). Fe cation-binding residues include histidine 96, aspartate 98, and histidine 160. Arginine 170 is a 2-oxoglutarate binding site.

The cofactor is Fe(2+). Requires L-ascorbate as cofactor.

This Cupriavidus metallidurans (strain ATCC 43123 / DSM 2839 / NBRC 102507 / CH34) (Ralstonia metallidurans) protein is PKHD-type hydroxylase Rmet_0838.